Consider the following 381-residue polypeptide: Chaperone protein DnaJ (381 aa).

Residues 3–66 (DYYETLGVER…DKRRMYDSGV (64 aa)) enclose the J domain. The CR-type zinc finger occupies 129–211 (GGTAHVKINT…CMGHGRVRTT (83 aa)). Positions 142, 145, 159, 162, 185, 188, 199, and 202 each coordinate Zn(2+). CXXCXGXG motif repeat units follow at residues 142–149 (CQECGGSG), 159–166 (CPDCHGQG), 185–192 (CERCEGHG), and 199–206 (CPSCMGHG). A disordered region spans residues 355–381 (ATHVSQASRPQAGQKKGFFSKLKDALS). Residues 356–365 (THVSQASRPQ) are compositionally biased toward polar residues.

Belongs to the DnaJ family. As to quaternary structure, homodimer. Zn(2+) serves as cofactor.

Its subcellular location is the cytoplasm. Functionally, participates actively in the response to hyperosmotic and heat shock by preventing the aggregation of stress-denatured proteins and by disaggregating proteins, also in an autonomous, DnaK-independent fashion. Unfolded proteins bind initially to DnaJ; upon interaction with the DnaJ-bound protein, DnaK hydrolyzes its bound ATP, resulting in the formation of a stable complex. GrpE releases ADP from DnaK; ATP binding to DnaK triggers the release of the substrate protein, thus completing the reaction cycle. Several rounds of ATP-dependent interactions between DnaJ, DnaK and GrpE are required for fully efficient folding. Also involved, together with DnaK and GrpE, in the DNA replication of plasmids through activation of initiation proteins. The polypeptide is Chaperone protein DnaJ (Bifidobacterium longum (strain NCC 2705)).